Consider the following 279-residue polypeptide: Tryptophan synthase alpha chain (279 aa).

Residues glutamate 50 and aspartate 61 each act as proton acceptor in the active site.

The protein belongs to the TrpA family. As to quaternary structure, tetramer of two alpha and two beta chains.

The catalysed reaction is (1S,2R)-1-C-(indol-3-yl)glycerol 3-phosphate + L-serine = D-glyceraldehyde 3-phosphate + L-tryptophan + H2O. It participates in amino-acid biosynthesis; L-tryptophan biosynthesis; L-tryptophan from chorismate: step 5/5. Its function is as follows. The alpha subunit is responsible for the aldol cleavage of indoleglycerol phosphate to indole and glyceraldehyde 3-phosphate. The polypeptide is Tryptophan synthase alpha chain (Sinorhizobium medicae (strain WSM419) (Ensifer medicae)).